Consider the following 415-residue polypeptide: SVF1-like protein YDR222W (415 aa).

This sequence belongs to the SVF1 family.

It is found in the cytoplasm. This Saccharomyces cerevisiae (strain ATCC 204508 / S288c) (Baker's yeast) protein is SVF1-like protein YDR222W.